A 261-amino-acid polypeptide reads, in one-letter code: Carnitinyl-CoA dehydratase (261 aa).

The active-site Nucleophile is Glu-111. The active-site Proton acceptor is Glu-131.

Belongs to the enoyl-CoA hydratase/isomerase family.

The catalysed reaction is (R)-carnitinyl-CoA = crotonobetainyl-CoA + H2O. It participates in amine and polyamine metabolism; carnitine metabolism. Catalyzes the reversible dehydration of L-carnitinyl-CoA to crotonobetainyl-CoA. The protein is Carnitinyl-CoA dehydratase of Citrobacter koseri (strain ATCC BAA-895 / CDC 4225-83 / SGSC4696).